The chain runs to 177 residues: Bifunctional protein PyrR (177 aa).

The PRPP-binding motif lies at 98-110 (IILVDDVIYTGRT).

The protein belongs to the purine/pyrimidine phosphoribosyltransferase family. PyrR subfamily. In terms of assembly, homodimer and homohexamer; in equilibrium.

The catalysed reaction is UMP + diphosphate = 5-phospho-alpha-D-ribose 1-diphosphate + uracil. In terms of biological role, regulates transcriptional attenuation of the pyrimidine nucleotide (pyr) operon by binding in a uridine-dependent manner to specific sites on pyr mRNA. This disrupts an antiterminator hairpin in the RNA and favors formation of a downstream transcription terminator, leading to a reduced expression of downstream genes. Functionally, also displays a weak uracil phosphoribosyltransferase activity which is not physiologically significant. This is Bifunctional protein PyrR from Clostridium kluyveri (strain ATCC 8527 / DSM 555 / NBRC 12016 / NCIMB 10680 / K1).